Consider the following 536-residue polypeptide: Trigger factor (536 aa).

The PPIase FKBP-type domain maps to 164-249; that stretch reads GDQVIIDFAG…VKEVKVPAAT (86 aa). The interval 439–536 is disordered; the sequence is IEADDDSGHV…APAKKAAAKK (98 aa). A compositionally biased stretch (basic and acidic residues) spans 472-502; the sequence is TKKEAVKDEAKAEEAPAKKAPAKKAEPKAEA. Over residues 503-515 the composition is skewed to low complexity; sequence KPAAAKKAAPAKA. Residues 516 to 525 are compositionally biased toward basic and acidic residues; it reads AAEEKAEPAK. Over residues 527-536 the composition is skewed to basic residues; the sequence is APAKKAAAKK.

It belongs to the FKBP-type PPIase family. Tig subfamily.

It is found in the cytoplasm. It catalyses the reaction [protein]-peptidylproline (omega=180) = [protein]-peptidylproline (omega=0). Functionally, involved in protein export. Acts as a chaperone by maintaining the newly synthesized protein in an open conformation. Functions as a peptidyl-prolyl cis-trans isomerase. In Sphingopyxis alaskensis (strain DSM 13593 / LMG 18877 / RB2256) (Sphingomonas alaskensis), this protein is Trigger factor.